The chain runs to 662 residues: uncharacterized protein (662 aa).

16 helical membrane passes run 10–30, 46–66, 68–88, 101–121, 167–187, 193–213, 217–237, 263–283, 285–305, 312–332, 342–362, 373–393, 394–414, 432–452, 460–480, and 485–505; these read SSIV…GWPV, PVIG…FLPI, AINL…LSKG, GFCW…EIIP, LIYY…TGAT, IALT…LAVA, SAYA…KPAV, PWVP…MAYL, ILYS…AILA, MWAG…LSVS, EVLI…AVLI, KVVE…LDIP, GFWL…FLIW, ALTV…SVIM, VLIP…STTI, and LVGR…ILVG.

The protein resides in the cell membrane. This is an uncharacterized protein from Sinorhizobium fredii (strain NBRC 101917 / NGR234).